Reading from the N-terminus, the 73-residue chain is Venom protein 55.1 (73 aa).

An N-terminal signal peptide occupies residues 1 to 19 (MNFLCILFVVSLISSLSKC). Pro57 is modified (proline amide). The propeptide occupies 61–73 (RRSFDLYALVNAK).

Belongs to the diuretic hormone class 2 family. In terms of tissue distribution, expressed by the venom gland.

It localises to the secreted. Functionally, regulates fluid secretion. The sequence is that of Venom protein 55.1 from Lychas mucronatus (Chinese swimming scorpion).